We begin with the raw amino-acid sequence, 382 residues long: Galactokinase (382 aa).

34 to 37 (EHTD) contributes to the substrate binding site. Residue 124 to 130 (GAGLSSS) coordinates ATP. Mg(2+) is bound by residues Ser-130 and Glu-162. Residue Asp-174 is the Proton acceptor of the active site. Tyr-223 serves as a coordination point for substrate.

Belongs to the GHMP kinase family. GalK subfamily.

The protein localises to the cytoplasm. It carries out the reaction alpha-D-galactose + ATP = alpha-D-galactose 1-phosphate + ADP + H(+). It functions in the pathway carbohydrate metabolism; galactose metabolism. Catalyzes the transfer of the gamma-phosphate of ATP to D-galactose to form alpha-D-galactose-1-phosphate (Gal-1-P). The protein is Galactokinase of Shigella boydii serotype 4 (strain Sb227).